The primary structure comprises 132 residues: Vesicle transport protein GOT1A (132 aa).

At 1–16 (MISITEWQKIGVGTTG) the chain is on the cytoplasmic side. A helical transmembrane segment spans residues 17-37 (FGIFFILFGMLLYFDSVLLAF). Residues 38 to 39 (GN) lie on the Lumenal side of the membrane. The chain crosses the membrane as a helical span at residues 40 to 60 (LLFLTGLSLIIGLRRTFSFFF). Over 61-68 (QRHKFKGT) the chain is Cytoplasmic. The chain crosses the membrane as a helical span at residues 69–89 (SFFLGGVVIVLLRWPLLGMCL). Residues 90–100 (ETYGFFSLFRG) are Lumenal-facing. A helical membrane pass occupies residues 101-121 (FFPVAFGFLGSASNIPFLSAL). Residues 122–132 (FQRLQGTSSMV) are Cytoplasmic-facing.

It belongs to the GOT1 family.

It localises to the golgi apparatus membrane. May be involved in fusion of ER-derived transport vesicles with the Golgi complex. In Bos taurus (Bovine), this protein is Vesicle transport protein GOT1A.